The chain runs to 548 residues: Membrane protein insertase YidC (548 aa).

The chain crosses the membrane as a helical span at residues Asn-6 to Asp-26. Residues Asn-28 to Ser-55 form a disordered region. A compositionally biased stretch (low complexity) spans Gln-30–Gln-50. The next 4 helical transmembrane spans lie at Phe-350 to Tyr-370, Leu-420 to Leu-440, Leu-458 to Ile-478, and Pro-499 to Val-519.

This sequence belongs to the OXA1/ALB3/YidC family. Type 1 subfamily. In terms of assembly, interacts with the Sec translocase complex via SecD. Specifically interacts with transmembrane segments of nascent integral membrane proteins during membrane integration.

Its subcellular location is the cell inner membrane. Its function is as follows. Required for the insertion and/or proper folding and/or complex formation of integral membrane proteins into the membrane. Involved in integration of membrane proteins that insert both dependently and independently of the Sec translocase complex, as well as at least some lipoproteins. Aids folding of multispanning membrane proteins. The protein is Membrane protein insertase YidC of Escherichia coli (strain K12 / MC4100 / BW2952).